Here is a 1480-residue protein sequence, read N- to C-terminus: ABC transporter G family member 49 (1480 aa).

The span at 1 to 18 (MHTTTQATPQKSMVMTTT) shows a compositional bias: polar residues. Disordered stretches follow at residues 1-42 (MHTT…AGSS), 60-81 (VSGE…EDDE), and 104-124 (SSTR…GGAA). Composition is skewed to gly residues over residues 63-73 (ELGGGGGGGGG) and 107-123 (RGGG…GGGA). One can recognise an ABC transporter 1 domain in the interval 212–485 (LAAKLGFSHH…FESCGFKCPE (274 aa)). 245-252 (GPPGCGKT) contributes to the ATP binding site. Residues 563 to 775 (HLLKACFDRE…AEIGLTGNEF (213 aa)) enclose the ABC transmembrane type-2 1 domain. Transmembrane regions (helical) follow at residues 581 to 601 (FLHI…GTVF), 619 to 639 (SLFY…VMSI), 656 to 676 (GWAY…VAAL), 699 to 719 (LLVL…VGSY), 725 to 745 (VGPI…GFLI), and 811 to 831 (VAAL…GLTI). Residues 877-1129 (ISFQDVNYYV…KVIQYFQSIP (253 aa)) form the ABC transporter 2 domain. 922–929 (GVTGAGKT) is an ATP binding site. An ABC transmembrane type-2 2 domain is found at 1202–1418 (EQFKACLWKQ…TLNLLFTTQF (217 aa)). The next 7 membrane-spanning stretches (helical) occupy residues 1226 to 1246 (IVFM…QGNI), 1254 to 1274 (GLFT…INNS), 1311 to 1331 (IPYV…TIGY), 1340 to 1360 (WFFY…MLIV), 1368 to 1388 (VASI…GFVM), 1396 to 1416 (WWIW…LFTT), and 1449 to 1469 (LLPL…ILYG).

This sequence belongs to the ABC transporter superfamily. ABCG family. PDR (TC 3.A.1.205) subfamily.

The protein resides in the membrane. In terms of biological role, may be a general defense protein. This is ABC transporter G family member 49 from Oryza sativa subsp. japonica (Rice).